The sequence spans 333 residues: Anthranilate phosphoribosyltransferase (333 aa).

5-phospho-alpha-D-ribose 1-diphosphate is bound by residues Gly80, 83-84 (GD), Thr88, 90-93 (NLST), 108-116 (KHGNRSASG), and Ser120. Gly80 provides a ligand contact to anthranilate. Ser92 is a binding site for Mg(2+). Asn111 is an anthranilate binding site. Residue Arg166 coordinates anthranilate. Positions 224 and 225 each coordinate Mg(2+).

This sequence belongs to the anthranilate phosphoribosyltransferase family. As to quaternary structure, homodimer. It depends on Mg(2+) as a cofactor.

It catalyses the reaction N-(5-phospho-beta-D-ribosyl)anthranilate + diphosphate = 5-phospho-alpha-D-ribose 1-diphosphate + anthranilate. It functions in the pathway amino-acid biosynthesis; L-tryptophan biosynthesis; L-tryptophan from chorismate: step 2/5. Its function is as follows. Catalyzes the transfer of the phosphoribosyl group of 5-phosphorylribose-1-pyrophosphate (PRPP) to anthranilate to yield N-(5'-phosphoribosyl)-anthranilate (PRA). This is Anthranilate phosphoribosyltransferase from Pyrobaculum arsenaticum (strain DSM 13514 / JCM 11321 / PZ6).